Reading from the N-terminus, the 269-residue chain is uncharacterized protein (269 aa).

One can recognise an RPE1 insert domain in the interval 152–197; sequence RYFSKPAYRNAFKANTIRATTAYKKVFNDPSLGSTYPLEVPLGKMS.

This is an uncharacterized protein from Rickettsia prowazekii (strain Madrid E).